The sequence spans 342 residues: Nucleoid-associated protein Sbal223_1817 (342 aa).

Belongs to the YejK family.

The protein localises to the cytoplasm. It is found in the nucleoid. This is Nucleoid-associated protein Sbal223_1817 from Shewanella baltica (strain OS223).